The chain runs to 333 residues: MQQYSCKYNKQAILLVNLGTPDNYDTKSIKRYLKEFLSDPRVIEANPVLWKIILNLIILPIRAKKNVHTYKTVWNKQHNKSPLLFYTENLADKLDKKLDNYIVDYAMRYGNPSIESKIKSLQDQGATEIIIFPLYPQYSATTTATVYDEVYRVLSKLRWQPTIKGINPYYDNKFHIQTISQQIKEHLKKLDSTPDTVLFSFHGLPKEYFDKGDPYYCHCYKTYRLVKEELQNEYPNIDFELSFQSRFGPKKWLEPYTTVKLEEFTKQNKSVVVIAPGFSADCLETLEELAISEKENFIKKGGKEFSLIPCLNDSNQHVDMLYNIIDEEICLKK.

His-202 and Glu-284 together coordinate Fe cation.

It belongs to the ferrochelatase family.

The protein localises to the cytoplasm. The enzyme catalyses heme b + 2 H(+) = protoporphyrin IX + Fe(2+). It functions in the pathway porphyrin-containing compound metabolism; protoheme biosynthesis; protoheme from protoporphyrin-IX: step 1/1. In terms of biological role, catalyzes the ferrous insertion into protoporphyrin IX. The sequence is that of Ferrochelatase from Francisella tularensis subsp. tularensis (strain FSC 198).